We begin with the raw amino-acid sequence, 70 residues long: Large ribosomal subunit protein bL28 (70 aa).

The disordered stretch occupies residues 1–26 (MAKRCEVCGKAPRSGNTVSHSDKKSG).

This sequence belongs to the bacterial ribosomal protein bL28 family.

In Thermotoga maritima (strain ATCC 43589 / DSM 3109 / JCM 10099 / NBRC 100826 / MSB8), this protein is Large ribosomal subunit protein bL28 (rpmB).